A 1352-amino-acid polypeptide reads, in one-letter code: Stress response protein NST1 (1352 aa).

Positions 1 to 12 (MSSKSQQPPTGL) are enriched in polar residues. Disordered stretches follow at residues 1–66 (MSSK…FFNF), 216–422 (NANA…TQSS), 503–522 (NGLR…VEVD), 531–616 (DHRA…FLSF), 651–693 (RRSV…AEEG), 726–880 (LREL…IAKE), 978–1118 (GLKS…DDAF), 1139–1275 (GSLI…GAGV), and 1307–1336 (GGTA…HQQQ). Residues 16-25 (AAKKRAKKAA) are compositionally biased toward basic residues. Over residues 26-45 (KQSQNPQPQSAPQTSSQTPA) the composition is skewed to low complexity. Residues 46–59 (SVPPLPPASVPDPL) show a composition bias toward pro residues. Positions 218-229 (NARSFPSPQQTI) are enriched in polar residues. The segment covering 242 to 254 (REEEYDDEEEIEE) has biased composition (acidic residues). Basic residues predominate over residues 268–277 (KKNKKKKKKG). A compositionally biased stretch (pro residues) spans 287-300 (VEPPAPLPPLPPPS). A compositionally biased stretch (low complexity) spans 317-330 (LPTHQPQPLSQQPP). The span at 331 to 349 (SLNPLPPPAPASAPTPTPP) shows a compositional bias: pro residues. Low complexity predominate over residues 368 to 388 (PARSARAAGKAPASAAPPHNA). Basic and acidic residues predominate over residues 531–541 (DHRAPELHDHD). The span at 542-583 (PDDLDGEESEEYDDDDDYADDDELDDDDIGTDEADVGDEIDE) shows a compositional bias: acidic residues. The segment covering 653–664 (SVREEQNLRDMQ) has biased composition (basic and acidic residues). Positions 665–680 (EETDEEEEEEDDDESR) are enriched in acidic residues. Basic and acidic residues-rich tracts occupy residues 681–693 (DEPM…AEEG), 726–749 (LREL…EAQK), and 759–880 (QKAE…IAKE). Residues 712 to 943 (AYRERVAKQR…AAQQAQRERA (232 aa)) adopt a coiled-coil conformation. The segment covering 1008-1020 (TNATPGRSMQKTP) has biased composition (polar residues). Over residues 1153–1164 (PTPPAPIAPPNL) the composition is skewed to pro residues. 2 stretches are compositionally biased toward polar residues: residues 1173-1186 (SDGQ…LRST) and 1208-1219 (QPQQRRPTTSWD).

This sequence belongs to the NST1 family.

It localises to the cytoplasm. Functionally, may act as a negative regulator of salt tolerance. This Cryptococcus neoformans var. neoformans serotype D (strain JEC21 / ATCC MYA-565) (Filobasidiella neoformans) protein is Stress response protein NST1 (NST1).